The following is a 241-amino-acid chain: PRA1 family protein H (241 aa).

3 helical membrane passes run 142–162 (LFIVFFACALYQMPLALVGLL), 189–205 (LSIGIGQCATAVLLTFL), and 209–228 (MALFSALAISYSVMILHAGF).

This sequence belongs to the PRA1 family.

The protein localises to the endoplasmic reticulum membrane. Functionally, may be involved in both secretory and endocytic intracellular trafficking in the endosomal/prevacuolar compartments. The polypeptide is PRA1 family protein H (PRA1H) (Arabidopsis thaliana (Mouse-ear cress)).